Here is a 117-residue protein sequence, read N- to C-terminus: Small ribosomal subunit protein uS12c (117 aa).

The disordered stretch occupies residues 9-40 (RNARQPIENRKKSPALRGCPQRRGTITPKKPN).

Belongs to the universal ribosomal protein uS12 family. As to quaternary structure, part of the 30S ribosomal subunit.

It localises to the plastid. The protein localises to the chloroplast. In terms of biological role, with S4 and S5 plays an important role in translational accuracy. Located at the interface of the 30S and 50S subunits. This chain is Small ribosomal subunit protein uS12c (rps12), found in Pinus koraiensis (Korean pine).